The primary structure comprises 454 residues: Bifunctional protein GlmU (454 aa).

The interval 1-225 is pyrophosphorylase; the sequence is MNIVILAAGM…VWETLGVNSK (225 aa). UDP-N-acetyl-alpha-D-glucosamine contacts are provided by residues 6 to 9, K20, Q71, 76 to 77, 98 to 100, G135, E150, N165, and N223; these read LAAG, GT, and YGD. Residue D100 participates in Mg(2+) binding. N223 lines the Mg(2+) pocket. Residues 226–246 form a linker region; that stretch reads LQLAEVERIHQGNQARRLLEA. The N-acetyltransferase stretch occupies residues 247–454; it reads GVTLLDPARI…WQRPVKQPKQ (208 aa). Positions 329 and 347 each coordinate UDP-N-acetyl-alpha-D-glucosamine. H359 acts as the Proton acceptor in catalysis. Residues Y362 and N373 each contribute to the UDP-N-acetyl-alpha-D-glucosamine site. Acetyl-CoA is bound by residues A376, 382–383, S401, A419, and R436; that span reads NY.

The protein in the N-terminal section; belongs to the N-acetylglucosamine-1-phosphate uridyltransferase family. In the C-terminal section; belongs to the transferase hexapeptide repeat family. Homotrimer. It depends on Mg(2+) as a cofactor.

It is found in the cytoplasm. It carries out the reaction alpha-D-glucosamine 1-phosphate + acetyl-CoA = N-acetyl-alpha-D-glucosamine 1-phosphate + CoA + H(+). The catalysed reaction is N-acetyl-alpha-D-glucosamine 1-phosphate + UTP + H(+) = UDP-N-acetyl-alpha-D-glucosamine + diphosphate. The protein operates within nucleotide-sugar biosynthesis; UDP-N-acetyl-alpha-D-glucosamine biosynthesis; N-acetyl-alpha-D-glucosamine 1-phosphate from alpha-D-glucosamine 6-phosphate (route II): step 2/2. It functions in the pathway nucleotide-sugar biosynthesis; UDP-N-acetyl-alpha-D-glucosamine biosynthesis; UDP-N-acetyl-alpha-D-glucosamine from N-acetyl-alpha-D-glucosamine 1-phosphate: step 1/1. It participates in bacterial outer membrane biogenesis; LPS lipid A biosynthesis. Its function is as follows. Catalyzes the last two sequential reactions in the de novo biosynthetic pathway for UDP-N-acetylglucosamine (UDP-GlcNAc). The C-terminal domain catalyzes the transfer of acetyl group from acetyl coenzyme A to glucosamine-1-phosphate (GlcN-1-P) to produce N-acetylglucosamine-1-phosphate (GlcNAc-1-P), which is converted into UDP-GlcNAc by the transfer of uridine 5-monophosphate (from uridine 5-triphosphate), a reaction catalyzed by the N-terminal domain. This chain is Bifunctional protein GlmU, found in Cupriavidus taiwanensis (strain DSM 17343 / BCRC 17206 / CCUG 44338 / CIP 107171 / LMG 19424 / R1) (Ralstonia taiwanensis (strain LMG 19424)).